A 629-amino-acid chain; its full sequence is tRNA uridine 5-carboxymethylaminomethyl modification enzyme MnmG (629 aa).

FAD contacts are provided by residues 14–19, V126, and S181; that span reads GAGHAG. 273–287 is an NAD(+) binding site; the sequence is GPRYCPSIEDKVVRF. An FAD-binding site is contributed by Q370.

This sequence belongs to the MnmG family. Homodimer. Heterotetramer of two MnmE and two MnmG subunits. Requires FAD as cofactor.

Its subcellular location is the cytoplasm. In terms of biological role, NAD-binding protein involved in the addition of a carboxymethylaminomethyl (cmnm) group at the wobble position (U34) of certain tRNAs, forming tRNA-cmnm(5)s(2)U34. This chain is tRNA uridine 5-carboxymethylaminomethyl modification enzyme MnmG, found in Geobacillus thermodenitrificans (strain NG80-2).